The chain runs to 365 residues: Quinone oxidoreductase-like protein 2 homolog (365 aa).

It belongs to the zinc-containing alcohol dehydrogenase family. Quinone oxidoreductase subfamily.

The chain is Quinone oxidoreductase-like protein 2 homolog from Nematostella vectensis (Starlet sea anemone).